A 567-amino-acid polypeptide reads, in one-letter code: Proline--tRNA ligase (567 aa).

This sequence belongs to the class-II aminoacyl-tRNA synthetase family. ProS type 1 subfamily. Homodimer.

Its subcellular location is the cytoplasm. The enzyme catalyses tRNA(Pro) + L-proline + ATP = L-prolyl-tRNA(Pro) + AMP + diphosphate. In terms of biological role, catalyzes the attachment of proline to tRNA(Pro) in a two-step reaction: proline is first activated by ATP to form Pro-AMP and then transferred to the acceptor end of tRNA(Pro). As ProRS can inadvertently accommodate and process non-cognate amino acids such as alanine and cysteine, to avoid such errors it has two additional distinct editing activities against alanine. One activity is designated as 'pretransfer' editing and involves the tRNA(Pro)-independent hydrolysis of activated Ala-AMP. The other activity is designated 'posttransfer' editing and involves deacylation of mischarged Ala-tRNA(Pro). The misacylated Cys-tRNA(Pro) is not edited by ProRS. The sequence is that of Proline--tRNA ligase from Streptomyces coelicolor (strain ATCC BAA-471 / A3(2) / M145).